The following is a 156-amino-acid chain: Large ribosomal subunit protein uL22 (156 aa).

Belongs to the universal ribosomal protein uL22 family. In terms of assembly, part of the 50S ribosomal subunit.

Its function is as follows. This protein binds specifically to 23S rRNA. It makes multiple contacts with different domains of the 23S rRNA in the assembled 50S subunit and ribosome. The globular domain of the protein is located near the polypeptide exit tunnel on the outside of the subunit, while an extended beta-hairpin is found that lines the wall of the exit tunnel in the center of the 70S ribosome. This chain is Large ribosomal subunit protein uL22, found in Methanocaldococcus jannaschii (strain ATCC 43067 / DSM 2661 / JAL-1 / JCM 10045 / NBRC 100440) (Methanococcus jannaschii).